A 290-amino-acid polypeptide reads, in one-letter code: Glycine--tRNA ligase alpha subunit (290 aa).

It belongs to the class-II aminoacyl-tRNA synthetase family. As to quaternary structure, tetramer of two alpha and two beta subunits.

It localises to the cytoplasm. The catalysed reaction is tRNA(Gly) + glycine + ATP = glycyl-tRNA(Gly) + AMP + diphosphate. The protein is Glycine--tRNA ligase alpha subunit of Syntrophotalea carbinolica (strain DSM 2380 / NBRC 103641 / GraBd1) (Pelobacter carbinolicus).